Reading from the N-terminus, the 365-residue chain is Cobalt-precorrin-5B C(1)-methyltransferase (365 aa).

This sequence belongs to the CbiD family.

It catalyses the reaction Co-precorrin-5B + S-adenosyl-L-methionine = Co-precorrin-6A + S-adenosyl-L-homocysteine. It functions in the pathway cofactor biosynthesis; adenosylcobalamin biosynthesis; cob(II)yrinate a,c-diamide from sirohydrochlorin (anaerobic route): step 6/10. Its function is as follows. Catalyzes the methylation of C-1 in cobalt-precorrin-5B to form cobalt-precorrin-6A. The sequence is that of Cobalt-precorrin-5B C(1)-methyltransferase from Methanococcus maripaludis (strain C6 / ATCC BAA-1332).